The chain runs to 454 residues: tRNA modification GTPase MnmE (454 aa).

Residues Arg-23, Glu-80, and Lys-120 each coordinate (6S)-5-formyl-5,6,7,8-tetrahydrofolate. The TrmE-type G domain maps to 216-377 (GMKVVIAGRP…LRNHLKQSMG (162 aa)). Asn-226 is a K(+) binding site. Residues 226–231 (NAGKSS), 245–251 (TDIAGTT), 270–273 (DTAG), 335–338 (NKAD), and 358–360 (SAR) contribute to the GTP site. Residue Ser-230 coordinates Mg(2+). 3 residues coordinate K(+): Thr-245, Ile-247, and Thr-250. Thr-251 provides a ligand contact to Mg(2+). Position 454 (Lys-454) interacts with (6S)-5-formyl-5,6,7,8-tetrahydrofolate.

This sequence belongs to the TRAFAC class TrmE-Era-EngA-EngB-Septin-like GTPase superfamily. TrmE GTPase family. Homodimer. Heterotetramer of two MnmE and two MnmG subunits. Requires K(+) as cofactor.

It localises to the cytoplasm. Its function is as follows. Exhibits a very high intrinsic GTPase hydrolysis rate. Involved in the addition of a carboxymethylaminomethyl (cmnm) group at the wobble position (U34) of certain tRNAs, forming tRNA-cmnm(5)s(2)U34. The protein is tRNA modification GTPase MnmE of Escherichia coli O17:K52:H18 (strain UMN026 / ExPEC).